The chain runs to 846 residues: Translation initiation factor IF-2 (846 aa).

The segment at 94 to 263 is disordered; the sequence is QRSPEEIQAE…HGFQNPTGPV (170 aa). Over residues 96–135 the composition is skewed to basic and acidic residues; it reads SPEEIQAEQKRELEERRAAENAARDKVEAEVRQRNEEQAR. 2 stretches are compositionally biased toward low complexity: residues 136–148 and 158–176; these read RQAA…APAP and AAPV…ASED. Composition is skewed to basic and acidic residues over residues 177 to 206 and 230 to 239; these read AAAR…RGEA and TTDEESDGAR. A compositionally biased stretch (basic residues) spans 240–253; that stretch reads RGRGGKSKLKKRNQ. The tr-type G domain maps to 346–513; it reads SRAPVVTVMG…AVLLQAEILE (168 aa). The tract at residues 355–362 is G1; it reads GHVDHGKT. 355–362 contributes to the GTP binding site; the sequence is GHVDHGKT. Residues 380 to 384 are G2; that stretch reads GITQH. The segment at 401–404 is G3; it reads DTPG. GTP-binding positions include 401 to 405 and 455 to 458; these read DTPGH and NKID. The tract at residues 455 to 458 is G4; it reads NKID. Positions 491–493 are G5; sequence SAK.

It belongs to the TRAFAC class translation factor GTPase superfamily. Classic translation factor GTPase family. IF-2 subfamily.

Its subcellular location is the cytoplasm. In terms of biological role, one of the essential components for the initiation of protein synthesis. Protects formylmethionyl-tRNA from spontaneous hydrolysis and promotes its binding to the 30S ribosomal subunits. Also involved in the hydrolysis of GTP during the formation of the 70S ribosomal complex. This chain is Translation initiation factor IF-2, found in Pseudomonas putida (strain ATCC 700007 / DSM 6899 / JCM 31910 / BCRC 17059 / LMG 24140 / F1).